We begin with the raw amino-acid sequence, 415 residues long: Probable G-protein coupled receptor 19 (415 aa).

Residues 1-69 (MGFDHRMETD…LNPGEVATAS (69 aa)) are Extracellular-facing. 2 N-linked (GlcNAc...) asparagine glycosylation sites follow: asparagine 25 and asparagine 52. The helical transmembrane segment at 70-90 (IFFGALWLFSIFGNSLVCLVI) threads the bilayer. Topologically, residues 91-102 (HRSRRTQSTTNY) are cytoplasmic. The chain crosses the membrane as a helical span at residues 103–123 (FVVSMACADLLISVASTPFVV). Topologically, residues 124-152 (LQFTTGRWTLGSAMCKVVRYFQYLTPGVQ) are extracellular. Cysteine 138 and cysteine 210 form a disulfide bridge. Residues 153-173 (IYVLLSICIDRFYTIVYPLSF) traverse the membrane as a helical segment. The Cytoplasmic portion of the chain corresponds to 174–182 (KVSREKAKR). Residues 183–203 (MIAASWILDAAFVTPVFFFYG) traverse the membrane as a helical segment. Topologically, residues 204–221 (SNWDSHCNYFLPPSWEGT) are extracellular. Residues 222–242 (AYTVIHFLVGFVIPSVLIILF) traverse the membrane as a helical segment. Residues 243 to 277 (YQKVIKYIWRIGTDGRTLRRTMNIVPRTKVKTVKM) are Cytoplasmic-facing. The helical transmembrane segment at 278 to 298 (FLLLNLVFLFSWLPFHVAQLW) threads the bilayer. The Extracellular portion of the chain corresponds to 299 to 309 (HPHEQDYRKSS). The chain crosses the membrane as a helical span at residues 310 to 332 (LVFTAVTWVSFSSSASKPTLYSI). Topologically, residues 333–415 (YNANFRRGMK…INSNPPNTFV (83 aa)) are cytoplasmic.

This sequence belongs to the G-protein coupled receptor 1 family. In terms of tissue distribution, abundant expression in the brain.

It is found in the cell membrane. Its function is as follows. G-protein coupled receptor that plays a role in the regulation of circadian rhythms and energy metabolism. Participates in maintaining proper circadian gene expression in the suprachiasmatic nucleus (SCN), the locus of the master circadian clock in the brain. May function as a coordinator of aging-associated metabolic dysfunction, stress response, DNA integrity management, and eventual senescence. Upon binding to adropin, modulates mitochondrial energy metabolism via the p44/42-PDK4 signaling pathway, influencing pyruvate dehydrogenase activity. The protein is Probable G-protein coupled receptor 19 (Gpr19) of Rattus norvegicus (Rat).